The sequence spans 322 residues: Ribosomal RNA small subunit methyltransferase H (322 aa).

Residues G47–H49, D67, F93, D112, and Q119 contribute to the S-adenosyl-L-methionine site.

This sequence belongs to the methyltransferase superfamily. RsmH family.

It is found in the cytoplasm. The enzyme catalyses cytidine(1402) in 16S rRNA + S-adenosyl-L-methionine = N(4)-methylcytidine(1402) in 16S rRNA + S-adenosyl-L-homocysteine + H(+). In terms of biological role, specifically methylates the N4 position of cytidine in position 1402 (C1402) of 16S rRNA. In Stenotrophomonas maltophilia (strain R551-3), this protein is Ribosomal RNA small subunit methyltransferase H.